The primary structure comprises 855 residues: E3 ubiquitin-protein ligase TRIM71 (855 aa).

N-acetylalanine is present on Ala-2. The segment at 12-94 (CLLCKEMCGS…ALKLRCPVCD (83 aa)) adopts an RING-type zinc-finger fold. Positions 26–42 (SSNSSASSSSSQTSTSS) are enriched in low complexity. Disordered stretches follow at residues 26–48 (SSNS…GGGP) and 127–177 (EEPP…SPGS). Positions 135–145 (RAGGGPGGAGG) are enriched in gly residues. A compositionally biased stretch (basic residues) spans 147–157 (SNHRHHAHHPA). The B box-type 1; atypical zinc-finger motif lies at 181–228 (RRPHGCSSCDEGNAASSRCLDCQEHLCDNCVRAHQRVRLTKDHYIERG). Residues 260–301 (ERLGFCQHHDDEVLHLYCDTCSVPICRECTLGRHGGHSFAYL) form a B box-type 2 zinc finger. 4 residues coordinate Zn(2+): Cys-265, His-268, Cys-288, and His-293. Coiled-coil stretches lie at residues 314–352 (QLLA…SEVK) and 378–411 (QVKA…VLEE). One copy of the Filamin repeat lies at 466 to 567 (SSGAFAPLTK…IENSPFKVVV (102 aa)). NHL repeat units follow at residues 580–623 (GLSF…FKPC), 627–670 (HHKF…FTFE), 674–717 (LLKF…FGPD), 721–764 (LNKY…IHPD), 768–811 (ARFL…FEAN), and 815–855 (LCKF…ILIF).

This sequence belongs to the TRIM/RBCC family. Interacts (via NHL repeats) with AGO2; the interaction increases in presence of RNA. Interacts with HSP90AA1. Interacts (via NHL repeats) with MOV10, PABPC1, PUM1, PUM2, STAU2, XRN1 and XRN2 in an RNA-dependent manner. Interacts with SHCBP1; leading to enhance its stability. In terms of processing, autoubiquitinated. In terms of tissue distribution, highly expressed in undifferentiated embryonic stem cells (ESCs). Expressed in the epiblast and in interfollicular epidermal stem cells during early development. Also expressed in male germ cells and in the reproductive tract. Highly expressed in neuroepithelial cells, and its expression declines as neurogenesis proceeds (at protein level). Expressed in ependymal cells of the brain.

It localises to the cytoplasm. It is found in the P-body. The enzyme catalyses S-ubiquitinyl-[E2 ubiquitin-conjugating enzyme]-L-cysteine + [acceptor protein]-L-lysine = [E2 ubiquitin-conjugating enzyme]-L-cysteine + N(6)-ubiquitinyl-[acceptor protein]-L-lysine.. It functions in the pathway protein modification; protein ubiquitination. Functionally, E3 ubiquitin-protein ligase that cooperates with the microRNAs (miRNAs) machinery and promotes embryonic stem cells proliferation and maintenance. Binds to miRNAs and associates with AGO2, participating in post-transcriptional repression of transcripts such as CDKN1A. Facilitates the G1-S transition to promote rapid embryonic stem cell self-renewal by repressing CDKN1A expression. In addition, participates in post-transcriptional mRNA repression in a miRNA independent mechanism. Required to maintain proliferation and prevent premature differentiation of neural progenitor cells during early neural development: positively regulates FGF signaling by controlling the stability of SHCBP1. Specific regulator of miRNA biogenesis. miRNA Binds MIR29A hairpin and postranscriptionally modulates MIR29A levels, which indirectly regulates TET proteins expression. The polypeptide is E3 ubiquitin-protein ligase TRIM71 (Trim71) (Mus musculus (Mouse)).